The sequence spans 199 residues: MNKTNDIDQLIYLFSKLPGLGIRSARRIVLYLLQDKDVRLKSLINHLIELDKKIVKCEICGNLDTKSICHICSSEYRDKSTIAIVETVAELCAMERSGNFKGLYHVLGHNLSAASRQNPRILRLPELLKRCFVENIKEVIIATNSTLEGQTTAYFIIEYLKEHPAKISRLASGIPIGGELDYLDEGTLSAAISLRQPCE.

The segment at C57 to C72 adopts a C4-type zinc-finger fold. One can recognise a Toprim domain in the interval S80 to P175.

Belongs to the RecR family.

Its function is as follows. May play a role in DNA repair. It seems to be involved in an RecBC-independent recombinational process of DNA repair. It may act with RecF and RecO. The protein is Recombination protein RecR of Rickettsia prowazekii (strain Madrid E).